The sequence spans 182 residues: Unknown protein 1 (182 aa).

This Helianthus annuus (Common sunflower) protein is Unknown protein 1.